Reading from the N-terminus, the 154-residue chain is 6,7-dimethyl-8-ribityllumazine synthase (154 aa).

5-amino-6-(D-ribitylamino)uracil contacts are provided by residues phenylalanine 22, 56 to 58 (AFE), and 80 to 82 (AVI). (2S)-2-hydroxy-3-oxobutyl phosphate is bound at residue 85–86 (ST). Catalysis depends on histidine 88, which acts as the Proton donor. Phenylalanine 113 is a 5-amino-6-(D-ribitylamino)uracil binding site. Arginine 127 provides a ligand contact to (2S)-2-hydroxy-3-oxobutyl phosphate.

It belongs to the DMRL synthase family.

It carries out the reaction (2S)-2-hydroxy-3-oxobutyl phosphate + 5-amino-6-(D-ribitylamino)uracil = 6,7-dimethyl-8-(1-D-ribityl)lumazine + phosphate + 2 H2O + H(+). Its pathway is cofactor biosynthesis; riboflavin biosynthesis; riboflavin from 2-hydroxy-3-oxobutyl phosphate and 5-amino-6-(D-ribitylamino)uracil: step 1/2. Its function is as follows. Catalyzes the formation of 6,7-dimethyl-8-ribityllumazine by condensation of 5-amino-6-(D-ribitylamino)uracil with 3,4-dihydroxy-2-butanone 4-phosphate. This is the penultimate step in the biosynthesis of riboflavin. This is 6,7-dimethyl-8-ribityllumazine synthase from Clostridium kluyveri (strain NBRC 12016).